Consider the following 334-residue polypeptide: GTPase Obg (334 aa).

Residues 1-159 enclose the Obg domain; the sequence is MRFVDEVVIK…KEVRLELNLL (159 aa). In terms of domain architecture, OBG-type G spans 160-331; that stretch reads ADVALLGLPN…LAKKLNEFLQ (172 aa). GTP-binding positions include 166 to 173, 191 to 195, 212 to 215, 282 to 285, and 312 to 314; these read GLPNAGKS, FTTMY, DIPG, NKID, and SAA. The Mg(2+) site is built by serine 173 and threonine 193.

This sequence belongs to the TRAFAC class OBG-HflX-like GTPase superfamily. OBG GTPase family. As to quaternary structure, monomer. Mg(2+) serves as cofactor.

The protein localises to the cytoplasm. An essential GTPase which binds GTP, GDP and possibly (p)ppGpp with moderate affinity, with high nucleotide exchange rates and a fairly low GTP hydrolysis rate. Plays a role in control of the cell cycle, stress response, ribosome biogenesis and in those bacteria that undergo differentiation, in morphogenesis control. This is GTPase Obg from Francisella tularensis subsp. holarctica (strain FTNF002-00 / FTA).